The following is a 195-amino-acid chain: Large ribosomal subunit protein mL58 (195 aa).

Residues 1-18 (MIGRGVCCRSFHTAGSAW) constitute a mitochondrion transit peptide.

It belongs to the mitochondrion-specific ribosomal protein mL58 family. Component of the mitochondrial large ribosomal subunit (mt-LSU). Mature yeast 74S mitochondrial ribosomes consist of a small (37S) and a large (54S) subunit. The 37S small subunit contains a 15S ribosomal RNA (15S mt-rRNA) and 34 different proteins. The 54S large subunit contains a 21S rRNA (21S mt-rRNA) and 46 different proteins.

The protein localises to the mitochondrion. Functionally, component of the mitochondrial ribosome (mitoribosome), a dedicated translation machinery responsible for the synthesis of mitochondrial genome-encoded proteins, including at least some of the essential transmembrane subunits of the mitochondrial respiratory chain. The mitoribosomes are attached to the mitochondrial inner membrane and translation products are cotranslationally integrated into the membrane. The protein is Large ribosomal subunit protein mL58 (MRPL20) of Saccharomyces cerevisiae (strain ATCC 204508 / S288c) (Baker's yeast).